A 604-amino-acid polypeptide reads, in one-letter code: Elongation factor 4 (604 aa).

Positions 4-186 constitute a tr-type G domain; the sequence is EFIRNFSIIA…AIVHLVPPPK (183 aa). Residues 16 to 21 and 133 to 136 contribute to the GTP site; these read DHGKST and NKID.

The protein belongs to the TRAFAC class translation factor GTPase superfamily. Classic translation factor GTPase family. LepA subfamily.

Its subcellular location is the cell inner membrane. It catalyses the reaction GTP + H2O = GDP + phosphate + H(+). In terms of biological role, required for accurate and efficient protein synthesis under certain stress conditions. May act as a fidelity factor of the translation reaction, by catalyzing a one-codon backward translocation of tRNAs on improperly translocated ribosomes. Back-translocation proceeds from a post-translocation (POST) complex to a pre-translocation (PRE) complex, thus giving elongation factor G a second chance to translocate the tRNAs correctly. Binds to ribosomes in a GTP-dependent manner. The polypeptide is Elongation factor 4 (Solibacter usitatus (strain Ellin6076)).